We begin with the raw amino-acid sequence, 789 residues long: Glycerol-3-phosphate acyltransferase (789 aa).

Residues 275 to 280 (SHRSYI) carry the HXXXXD motif motif.

It belongs to the GPAT/DAPAT family.

The protein localises to the cell membrane. It carries out the reaction sn-glycerol 3-phosphate + an acyl-CoA = a 1-acyl-sn-glycero-3-phosphate + CoA. It functions in the pathway phospholipid metabolism; CDP-diacylglycerol biosynthesis; CDP-diacylglycerol from sn-glycerol 3-phosphate: step 1/3. This chain is Glycerol-3-phosphate acyltransferase, found in Mycobacterium bovis (strain BCG / Pasteur 1173P2).